Reading from the N-terminus, the 433-residue chain is Signal recognition particle 54 kDa protein (433 aa).

GTP is bound by residues 106-113 (GVEGSGKT), 186-190 (DTAGR), and 244-247 (TKMD).

Belongs to the GTP-binding SRP family. SRP54 subfamily. In terms of assembly, part of the signal recognition particle protein translocation system, which is composed of SRP and FtsY. Archaeal SRP consists of a 7S RNA molecule of 300 nucleotides and two protein subunits: SRP54 and SRP19.

The protein resides in the cytoplasm. The enzyme catalyses GTP + H2O = GDP + phosphate + H(+). Involved in targeting and insertion of nascent membrane proteins into the cytoplasmic membrane. Binds to the hydrophobic signal sequence of the ribosome-nascent chain (RNC) as it emerges from the ribosomes. The SRP-RNC complex is then targeted to the cytoplasmic membrane where it interacts with the SRP receptor FtsY. The sequence is that of Signal recognition particle 54 kDa protein from Pyrobaculum islandicum (strain DSM 4184 / JCM 9189 / GEO3).